We begin with the raw amino-acid sequence, 335 residues long: uncharacterized protein (335 aa).

This is an uncharacterized protein from Acanthamoeba polyphaga mimivirus (APMV).